The chain runs to 161 residues: Cyclic pyranopterin monophosphate synthase (161 aa).

Residues 75 to 77 (LCH) and 113 to 114 (ME) each bind substrate. Residue Asp128 is part of the active site.

Belongs to the MoaC family. Homohexamer; trimer of dimers.

It catalyses the reaction (8S)-3',8-cyclo-7,8-dihydroguanosine 5'-triphosphate = cyclic pyranopterin phosphate + diphosphate. It functions in the pathway cofactor biosynthesis; molybdopterin biosynthesis. Catalyzes the conversion of (8S)-3',8-cyclo-7,8-dihydroguanosine 5'-triphosphate to cyclic pyranopterin monophosphate (cPMP). In Edwardsiella ictaluri (strain 93-146), this protein is Cyclic pyranopterin monophosphate synthase.